A 342-amino-acid chain; its full sequence is Maltose regulon regulatory protein MalI (342 aa).

Residues 7-61 (ITIHDVALAAGVSVSTVSLVLSGKGRISTATGERVNAAIEELGFVRNRQASALRG) enclose the HTH lacI-type domain. The segment at residues 9 to 28 (IHDVALAAGVSVSTVSLVLS) is a DNA-binding region (H-T-H motif).

Repressor for the malX and malY genes. Also regulates its own expression. Binds maltose as an inducer. The sequence is that of Maltose regulon regulatory protein MalI (malI) from Escherichia coli (strain K12).